The sequence spans 253 residues: Imidazole glycerol phosphate synthase subunit HisF (253 aa).

Residues aspartate 11 and aspartate 130 contribute to the active site.

Belongs to the HisA/HisF family. As to quaternary structure, heterodimer of HisH and HisF.

Its subcellular location is the cytoplasm. It carries out the reaction 5-[(5-phospho-1-deoxy-D-ribulos-1-ylimino)methylamino]-1-(5-phospho-beta-D-ribosyl)imidazole-4-carboxamide + L-glutamine = D-erythro-1-(imidazol-4-yl)glycerol 3-phosphate + 5-amino-1-(5-phospho-beta-D-ribosyl)imidazole-4-carboxamide + L-glutamate + H(+). The protein operates within amino-acid biosynthesis; L-histidine biosynthesis; L-histidine from 5-phospho-alpha-D-ribose 1-diphosphate: step 5/9. In terms of biological role, IGPS catalyzes the conversion of PRFAR and glutamine to IGP, AICAR and glutamate. The HisF subunit catalyzes the cyclization activity that produces IGP and AICAR from PRFAR using the ammonia provided by the HisH subunit. This chain is Imidazole glycerol phosphate synthase subunit HisF, found in Dehalococcoides mccartyi (strain CBDB1).